We begin with the raw amino-acid sequence, 122 residues long: Large ribosomal subunit protein bL12 (122 aa).

This sequence belongs to the bacterial ribosomal protein bL12 family. In terms of assembly, homodimer. Part of the ribosomal stalk of the 50S ribosomal subunit. Forms a multimeric L10(L12)X complex, where L10 forms an elongated spine to which 2 to 4 L12 dimers bind in a sequential fashion. Binds GTP-bound translation factors.

Functionally, forms part of the ribosomal stalk which helps the ribosome interact with GTP-bound translation factors. Is thus essential for accurate translation. This chain is Large ribosomal subunit protein bL12, found in Shewanella woodyi (strain ATCC 51908 / MS32).